We begin with the raw amino-acid sequence, 399 residues long: A-type ATP synthase subunit C (399 aa).

Belongs to the V-ATPase V0D/AC39 subunit family. The A-type ATPase is composed of subunits A(3), B(3), C, D, E(1 or 2), F, H(2), I and K(x).

The protein resides in the cell membrane. Component of the A-type ATP synthase that produces ATP from ADP in the presence of a proton gradient across the membrane. This chain is A-type ATP synthase subunit C, found in Methanocaldococcus jannaschii (strain ATCC 43067 / DSM 2661 / JAL-1 / JCM 10045 / NBRC 100440) (Methanococcus jannaschii).